An 85-amino-acid chain; its full sequence is Glutaredoxin 1 (85 aa).

Residues 1 to 85 enclose the Glutaredoxin domain; it reads MQTVIFGRSG…AAWVKENLDA (85 aa). Residues Cys11 and Cys14 are joined by a disulfide bond.

It belongs to the glutaredoxin family. As to quaternary structure, monomer.

The disulfide bond functions as an electron carrier in the glutathione-dependent synthesis of deoxyribonucleotides by the enzyme ribonucleotide reductase. In addition, it is also involved in reducing some disulfides in a coupled system with glutathione reductase. The polypeptide is Glutaredoxin 1 (grxA) (Shigella flexneri).